A 438-amino-acid polypeptide reads, in one-letter code: NADH-quinone oxidoreductase subunit D (438 aa).

It belongs to the complex I 49 kDa subunit family. In terms of assembly, NDH-1 is composed of 14 different subunits. Subunits NuoB, C, D, E, F, and G constitute the peripheral sector of the complex.

Its subcellular location is the cell membrane. The enzyme catalyses a quinone + NADH + 5 H(+)(in) = a quinol + NAD(+) + 4 H(+)(out). Its function is as follows. NDH-1 shuttles electrons from NADH, via FMN and iron-sulfur (Fe-S) centers, to quinones in the respiratory chain. The immediate electron acceptor for the enzyme in this species is believed to be a menaquinone. Couples the redox reaction to proton translocation (for every two electrons transferred, four hydrogen ions are translocated across the cytoplasmic membrane), and thus conserves the redox energy in a proton gradient. This is NADH-quinone oxidoreductase subunit D from Rhodococcus jostii (strain RHA1).